The following is a 204-amino-acid chain: MPSFLRGILRPKERHHENKNHSQMSSDSLTSSYPTSPPKLEKTEAGSIISSTTQKKTSHHANLTITTKTEQSQRRPKIIDQVRRVESLGEQVSQKQRHMLESLINKVYTGPLGEELVQTLYLRIWAMKETPESTKILQMREDIRDQYLRMKTERWLRTLIRGKKTKLRDFQKRYEEVHPYLMMERVEQIIMEEAWKLAAHIVQE.

The tract at residues 1-75 is disordered; that stretch reads MPSFLRGILR…TTKTEQSQRR (75 aa). Positions 10-20 are enriched in basic and acidic residues; it reads RPKERHHENKN. Residues 25 to 34 are compositionally biased toward low complexity; sequence SSDSLTSSYP. Residues 60 to 70 show a composition bias toward polar residues; it reads HANLTITTKTE.

Belongs to the respirovirus protein C family.

The protein is Protein C (P/V/C) of Homo sapiens (Human).